A 289-amino-acid polypeptide reads, in one-letter code: Bidirectional sugar transporter SWEET15 (289 aa).

The Extracellular portion of the chain corresponds to 1–10 (MAMAMANHHT). Residues 11-31 (LGLIFGILGNIISFLVYFAPA) traverse the membrane as a helical segment. Residues 14-100 (IFGILGNIIS…LYFFYAPMQA (87 aa)) enclose the MtN3/slv 1 domain. The Cytoplasmic portion of the chain corresponds to 32–45 (PTFYRIYKRKSAEG). The chain crosses the membrane as a helical span at residues 46-66 (FHSLPYIVALFSAMLWLYYAL). Residues 67 to 70 (LKKD) are Extracellular-facing. The chain crosses the membrane as a helical span at residues 71–91 (AFLLITINSFGCAIESFYILL). Residues 92–106 (YFFYAPMQAKKQTLK) lie on the Cytoplasmic side of the membrane. The helical transmembrane segment at 107 to 127 (VVISLNVGVFSILVVLIQFLL) threads the bilayer. The Extracellular portion of the chain corresponds to 128 to 134 (KGSNRIN). Residues 135–155 (VFGWICASFSVAVFAAPLSIV) traverse the membrane as a helical segment. In terms of domain architecture, MtN3/slv 2 spans 136–219 (FGWICASFSV…VLYGFYRNAG (84 aa)). Over 156-167 (AKVIRTKSVEFM) the chain is Cytoplasmic. Residues 168-188 (PFSLSFFLTLSAIMWFAYGLL) form a helical membrane-spanning segment. The Extracellular portion of the chain corresponds to 189–193 (KNDPC). A helical membrane pass occupies residues 194 to 214 (VAIPNILGVILGLVQMVLYGF). The Cytoplasmic portion of the chain corresponds to 215–289 (YRNAGKEKME…GELQPNGSTV (75 aa)). Residues 249-289 (GAQQNGIKKSGSEDVKDDEETGNREKSTENSGELQPNGSTV) form a disordered region. Over residues 277 to 289 (ENSGELQPNGSTV) the composition is skewed to polar residues.

This sequence belongs to the SWEET sugar transporter family. Forms homooligomers and/or heterooligomers.

It localises to the cell membrane. Its function is as follows. Mediates both low-affinity uptake and efflux of sugar across the plasma membrane. The protein is Bidirectional sugar transporter SWEET15 of Vitis vinifera (Grape).